Consider the following 189-residue polypeptide: Large ribosomal subunit protein uL5c (189 aa).

The protein belongs to the universal ribosomal protein uL5 family. In terms of assembly, part of the 50S ribosomal subunit; contacts the 5S rRNA.

The protein localises to the plastid. It localises to the chloroplast. Functionally, binds 5S rRNA, forms part of the central protuberance of the 50S subunit. This is Large ribosomal subunit protein uL5c (rpl5) from Chara vulgaris (Common stonewort).